We begin with the raw amino-acid sequence, 169 residues long: Ribosome maturation factor RimM (169 aa).

A PRC barrel domain is found at 97-169 (NDEAYFTDLI…KIVVDWEYDY (73 aa)).

Belongs to the RimM family. Binds ribosomal protein uS19.

The protein resides in the cytoplasm. In terms of biological role, an accessory protein needed during the final step in the assembly of 30S ribosomal subunit, possibly for assembly of the head region. Essential for efficient processing of 16S rRNA. May be needed both before and after RbfA during the maturation of 16S rRNA. It has affinity for free ribosomal 30S subunits but not for 70S ribosomes. In Francisella philomiragia subsp. philomiragia (strain ATCC 25017 / CCUG 19701 / FSC 153 / O#319-036), this protein is Ribosome maturation factor RimM.